Consider the following 400-residue polypeptide: Putative cytochrome P450 133B2 (400 aa).

Cys-348 contacts heme.

The protein belongs to the cytochrome P450 family. Heme serves as cofactor.

The sequence is that of Putative cytochrome P450 133B2 (cyp133B2) from Xylella fastidiosa (strain 9a5c).